Consider the following 176-residue polypeptide: Secreted LysM effector ELP2 (176 aa).

Residues methionine 1 to alanine 18 form the signal peptide. A compositionally biased stretch (low complexity) spans threonine 31–alanine 45. Residues threonine 31–threonine 50 are disordered. Residues histidine 58–valine 102 enclose the LysM 1 domain. Asparagine 111 carries N-linked (GlcNAc...) asparagine glycosylation. The LysM 2 domain occupies alanine 129 to valine 173.

It belongs to the secreted LysM effector family. In terms of assembly, forms homodimers in a chitin-independent manner through interactions at the N-termini of EPL2 monomers. Homodimers are further polymerized in a chitin-dependent manner.

Its subcellular location is the secreted. Secreted effector that enables the plant pathogenic fungus to manipulate host defenses for successful infection. Binds chitin oligomers and polymer with high affinity and plays a dual role, not only in the suppression of chitin-triggered immune responses, but also in appressorium function. Does not protect fungal hyphae against plant chitinases but suppresses chitin-triggered plant immune responses. Chitin-induced polymerization of homodimers forms a contiguous ELP2 highly oligomeric super-complexe that may precipitate at infection sites to eliminate chitin oligomers, and thus suppress the activation of chitin-induced plant immunity. In Colletotrichum higginsianum (strain IMI 349063) (Crucifer anthracnose fungus), this protein is Secreted LysM effector ELP2.